Consider the following 264-residue polypeptide: MIVVKIGGRVVKNSLDKIILDILNINDKVILVHGGGDIVTDYTKRLGIEPVFVTSPEGIRSRYTTKEELEVYIMAMSLINKSITSKLCSLGKNAIGITGVDGGLLLAERKKRIVVIDERGKKRIIEGGYTGKVKEVRSEIINHLVKLFDIIVVSPIALDVEERTPLNIDGDQAAFAISKALRANVLILLSDVEGVLVEGKVINRLTPSEAKELSKKIGPGMNRKLLMAAESVENGVNKVIIGSGVKDRPIINALELNGTVIANG.

Substrate-binding positions include 35-36, arginine 62, and asparagine 167; that span reads GG.

It belongs to the acetylglutamate kinase family. LysZ subfamily.

The protein resides in the cytoplasm. It catalyses the reaction [amino-group carrier protein]-C-terminal-N-(1,4-dicarboxybutan-1-yl)-L-glutamine + ATP = [amino-group carrier protein]-C-terminal-N-(1-carboxy-5-phosphooxy-5-oxopentan-1-yl)-L-glutamine + ADP. The catalysed reaction is [amino-group carrier protein]-C-terminal-gamma-(L-glutamyl)-L-glutamate + ATP = [amino-group carrier protein]-C-terminal-gamma-(5-phospho-L-glutamyl)-L-glutamate + ADP. It participates in amino-acid biosynthesis; L-lysine biosynthesis via AAA pathway; L-lysine from L-alpha-aminoadipate (Thermus route): step 2/5. The protein operates within amino-acid biosynthesis; L-arginine biosynthesis. Functionally, involved in both the arginine and lysine biosynthetic pathways. Phosphorylates the LysW-bound precursors glutamate (for arginine biosynthesis), respectively alpha-aminoadipate (for lysine biosynthesis). The chain is [LysW]-aminoadipate/[LysW]-glutamate kinase from Saccharolobus solfataricus (strain ATCC 35092 / DSM 1617 / JCM 11322 / P2) (Sulfolobus solfataricus).